The sequence spans 351 residues: Xaa-Pro dipeptidase (351 aa).

Positions 212, 223, 287, 316, and 330 each coordinate Co(2+).

It belongs to the peptidase M24B family. Archaeal-type prolidase subfamily. As to quaternary structure, homodimer. Co(2+) serves as cofactor.

The protein localises to the cytoplasm. It catalyses the reaction Xaa-L-Pro dipeptide + H2O = an L-alpha-amino acid + L-proline. Its function is as follows. Splits dipeptides with a prolyl in the C-terminal position and a nonpolar amino acid at the N-terminal position. This chain is Xaa-Pro dipeptidase (pepQ), found in Pyrococcus horikoshii (strain ATCC 700860 / DSM 12428 / JCM 9974 / NBRC 100139 / OT-3).